We begin with the raw amino-acid sequence, 154 residues long: MARIAYSTKIEGDNLARGKANELSISPKHSIEIADFIRHQRVNDALAYLADVVALKKAIPFRHFNRNVAHKRGLPGNWDAGRYPVKASKAYIRILESIKKNAEYTGLDTENLEIIHASANRGRAQKAYFPRAMGRASPKVRETVNIEIVVREVA.

It belongs to the universal ribosomal protein uL22 family. In terms of assembly, part of the 50S ribosomal subunit.

This protein binds specifically to 23S rRNA. It makes multiple contacts with different domains of the 23S rRNA in the assembled 50S subunit and ribosome. In terms of biological role, the globular domain of the protein is located near the polypeptide exit tunnel on the outside of the subunit, while an extended beta-hairpin is found that lines the wall of the exit tunnel in the center of the 70S ribosome. The protein is Large ribosomal subunit protein uL22 of Methanoregula boonei (strain DSM 21154 / JCM 14090 / 6A8).